The following is a 60-amino-acid chain: Prophage outer membrane lipoprotein RzoD (60 aa).

An N-terminal signal peptide occupies residues 1–19; it reads MRKLKMMLCVMMLPLVVVG. Cys-20 carries N-palmitoyl cysteine lipidation. A lipid anchor (S-diacylglycerol cysteine) is attached at Cys-20.

This sequence belongs to the lambdalikevirus o-spanin family. As to quaternary structure, homodimer; disulfide-linked. Interacts (via C-terminus) with RZ (via C-terminus). Part of the spanin complex which spans the entire periplasmic space. The spanin complex is composed of spanin, inner membrane subunit and spanin, outer membrane subunit.

Its subcellular location is the cell outer membrane. In terms of biological role, component of the spanin complex that disrupts the outer membrane and causes cell lysis during virus exit. The spanin complex conducts the final step in cell lysis by disrupting the outer membrane after holin and endolysin action have permeabilized the inner membrane and degraded the host peptidoglycans. This is Prophage outer membrane lipoprotein RzoD (rzoD) from Escherichia coli (strain K12).